The following is a 337-amino-acid chain: tRNA N6-adenosine threonylcarbamoyltransferase (337 aa).

Positions 114 and 118 each coordinate Fe cation. Residues 136–140 (LVSGG), Asp-169, Gly-182, Asp-186, and Asn-275 each bind substrate. Asp-301 provides a ligand contact to Fe cation.

It belongs to the KAE1 / TsaD family. Fe(2+) serves as cofactor.

Its subcellular location is the cytoplasm. It carries out the reaction L-threonylcarbamoyladenylate + adenosine(37) in tRNA = N(6)-L-threonylcarbamoyladenosine(37) in tRNA + AMP + H(+). Its function is as follows. Required for the formation of a threonylcarbamoyl group on adenosine at position 37 (t(6)A37) in tRNAs that read codons beginning with adenine. Is involved in the transfer of the threonylcarbamoyl moiety of threonylcarbamoyl-AMP (TC-AMP) to the N6 group of A37, together with TsaE and TsaB. TsaD likely plays a direct catalytic role in this reaction. This is tRNA N6-adenosine threonylcarbamoyltransferase from Streptococcus uberis (strain ATCC BAA-854 / 0140J).